The primary structure comprises 184 residues: MNSRPTWIQVEFIRGSRTFVNLCWACILVCGATGFLLVGFSSCIGKDLIPILSSKQIAFIPQGLVMCFYGIAGLFLGLYLCCTVFWNVGSGYNYFDKREGISSIFRWGFPGKNRRIHIRLILGDIEAVGLRSQEGLFPSRILYLKVRGRQSIPLTRIGENSTPEYMEEKAAELARFLRISIEGF.

The next 2 helical transmembrane spans lie at 20 to 42 (VNLCWACILVCGATGFLLVGFSS) and 57 to 79 (IAFIPQGLVMCFYGIAGLFLGLY).

It belongs to the Ycf4 family.

It localises to the plastid. The protein resides in the chloroplast thylakoid membrane. In terms of biological role, seems to be required for the assembly of the photosystem I complex. In Adiantum capillus-veneris (Maidenhair fern), this protein is Photosystem I assembly protein Ycf4.